Reading from the N-terminus, the 367-residue chain is Putative S-adenosyl-L-methionine-dependent methyltransferase MT0751 (367 aa).

Residues aspartate 137 and 166-167 contribute to the S-adenosyl-L-methionine site; that span reads DL. Positions 348–358 are enriched in polar residues; it reads TRSDAHQASTT. The segment at 348 to 367 is disordered; that stretch reads TRSDAHQASTTAPPPPGLTG.

The protein belongs to the UPF0677 family.

Exhibits S-adenosyl-L-methionine-dependent methyltransferase activity. In Mycobacterium tuberculosis (strain CDC 1551 / Oshkosh), this protein is Putative S-adenosyl-L-methionine-dependent methyltransferase MT0751.